The following is a 283-amino-acid chain: Elongation factor Ts (283 aa).

The involved in Mg(2+) ion dislocation from EF-Tu stretch occupies residues 79-82 (TDFV).

It belongs to the EF-Ts family.

The protein resides in the cytoplasm. Its function is as follows. Associates with the EF-Tu.GDP complex and induces the exchange of GDP to GTP. It remains bound to the aminoacyl-tRNA.EF-Tu.GTP complex up to the GTP hydrolysis stage on the ribosome. The sequence is that of Elongation factor Ts from Shewanella denitrificans (strain OS217 / ATCC BAA-1090 / DSM 15013).